Here is a 202-residue protein sequence, read N- to C-terminus: Probable chemoreceptor glutamine deamidase CheD (202 aa).

Belongs to the CheD family.

It catalyses the reaction L-glutaminyl-[protein] + H2O = L-glutamyl-[protein] + NH4(+). In terms of biological role, probably deamidates glutamine residues to glutamate on methyl-accepting chemotaxis receptors (MCPs), playing an important role in chemotaxis. In Thiobacillus denitrificans (strain ATCC 25259 / T1), this protein is Probable chemoreceptor glutamine deamidase CheD.